A 280-amino-acid polypeptide reads, in one-letter code: Shikimate dehydrogenase (NADP(+)) (280 aa).

Shikimate contacts are provided by residues S18–S20 and T65. Catalysis depends on K69, which acts as the Proton acceptor. Positions 90 and 105 each coordinate shikimate. NADP(+) contacts are provided by residues G130–A134, N154–R159, and L219. Shikimate is bound at residue Y221. G242 contributes to the NADP(+) binding site.

This sequence belongs to the shikimate dehydrogenase family. As to quaternary structure, homodimer.

The enzyme catalyses shikimate + NADP(+) = 3-dehydroshikimate + NADPH + H(+). It participates in metabolic intermediate biosynthesis; chorismate biosynthesis; chorismate from D-erythrose 4-phosphate and phosphoenolpyruvate: step 4/7. Its function is as follows. Involved in the biosynthesis of the chorismate, which leads to the biosynthesis of aromatic amino acids. Catalyzes the reversible NADPH linked reduction of 3-dehydroshikimate (DHSA) to yield shikimate (SA). This Mesorhizobium japonicum (strain LMG 29417 / CECT 9101 / MAFF 303099) (Mesorhizobium loti (strain MAFF 303099)) protein is Shikimate dehydrogenase (NADP(+)).